The chain runs to 688 residues: Sialic acid-binding Ig-like lectin 10 (688 aa).

A signal peptide spans 1-17 (MSLLLFLLSFLLDGPQG). The Extracellular portion of the chain corresponds to 18-543 (QMESYFLQVQ…DKDSATAFSK (526 aa)). The 113-residue stretch at 26–138 (VQRIVKAQEG…SFKEEFRLQV (113 aa)) folds into the Ig-like V-type domain. Disulfide bonds link cysteine 37-cysteine 172, cysteine 42-cysteine 102, and cysteine 163-cysteine 214. Arginine 120 provides a ligand contact to N-acetylneuraminate. Positions 145–228 (PDIFIPEVLE…SRMSTQRTVR (84 aa)) constitute an Ig-like C2-type 1 domain. Residues asparagine 195 and asparagine 246 are each glycosylated (N-linked (GlcNAc...) asparagine). Ig-like C2-type domains are found at residues 250-334 (PDLH…LDLS) and 339-436 (PQDL…LSLS). Disulfide bonds link cysteine 271/cysteine 318 and cysteine 375/cysteine 420. A helical transmembrane segment spans residues 544-564 (GAVLGFGITALLALCLIVVIV). At 565–688 (KTLQKKGTQE…YSDYTEVRVH (124 aa)) the chain is on the cytoplasmic side. The ITIM motif 1 motif lies at 588-593 (LDYINV). A disordered region spans residues 602–656 (RNWKAEPDAPSRSSPLDTHFPKPKKKQKDPHFTYPGCPDPTSSSQVPVSENNPEE). The segment covering 641–652 (PTSSSQVPVSEN) has biased composition (polar residues). The ITIM motif 2 signature appears at 657–662 (LHYAAL). Tyrosine 659 is modified (phosphotyrosine).

This sequence belongs to the immunoglobulin superfamily. SIGLEC (sialic acid binding Ig-like lectin) family. In terms of assembly, interacts with PTPN6/SHP-1 upon phosphorylation. Interacts with NCF1. Interacts with CD24; the probable CD24:SIGLEC10 complex is proposed to inhibit HGMB1-mediated tissue damage immune response. Interacts with HMGB1; the interaction is dependent on CD24. Associates with membrane IgM on the B cell surface. Interacts with RIGI, CBL and PTPN11. Post-translationally, phosphorylation of Tyr-659 is involved in binding to PTPN6. In terms of tissue distribution, expressed in B cells with high levels in pre-B cells and B1a cells of the peritoneal cavity.

Its subcellular location is the cell membrane. Functionally, putative adhesion molecule that mediates sialic-acid dependent binding to cells. Preferentially binds to alpha-2,3- or alpha-2,6-linked sialic acid. The sialic acid recognition site may be masked by cis interactions with sialic acids on the same cell surface. In the immune response, seems to act as an inhibitory receptor upon ligand induced tyrosine phosphorylation by recruiting cytoplasmic phosphatase(s) via their SH2 domain(s) that block signal transduction through dephosphorylation of signaling molecules. Involved in negative regulation of B-cell antigen receptor signaling and specifically acts on B1 cells to inhibit Ca(2+) signaling, cellular expansion and antibody secretion. The inhibition of B cell activation is dependent on PTPN6/SHP-1. In association with CD24 may be involved in the selective suppression of the immune response to danger-associated molecular patterns (DAMPs) such as HMGB1, HSP70 and HSP90. In association with CD24 may regulate the immune repsonse of natural killer (NK) cells. Plays a role in the control of autoimmunity. During initiation of adaptive immune responses by CD8-alpha(+) dendritic cells inhibits cross-presentation by impairing the formation of MHC class I-peptide complexes. The function seems to implicate recruitment of PTPN6/SHP-1, which dephosphorylates NCF1 of the NADPH oxidase complex consequently promoting phagosomal acidification. (Microbial infection) During infection by RNA viruses inhibits RIG-I signaling in macrophages by promoting its CBL-dependent ubiquitination and degradation via PTPN11/SHP-2. In Mus musculus (Mouse), this protein is Sialic acid-binding Ig-like lectin 10 (Siglec10).